Consider the following 784-residue polypeptide: Homeobox-leucine zipper protein ROC2 (784 aa).

Positions 60 to 113 (AESGDNMIRSRASDPLGGDEFESKSGSENVDGVSVDDQDPNQRPRKKRYHRHTQ) are disordered. Residues 102–113 (RPRKKRYHRHTQ) show a composition bias toward basic residues. A DNA-binding region (homeobox) is located at residues 104–163 (RKKRYHRHTQHQIQEMEAFFKECPHPDDKQRKELSRELGLEPLQVKFWFQNKRTQMKNQH). Positions 158-234 (QMKNQHERHE…DRISAIAAKY (77 aa)) form a coiled coil. An START domain is found at 286–523 (SEVDKPMIVE…LDRQCERLAS (238 aa)).

Belongs to the HD-ZIP homeobox family. Class IV subfamily.

The protein localises to the nucleus. In terms of biological role, probable transcription factor. In Oryza sativa subsp. japonica (Rice), this protein is Homeobox-leucine zipper protein ROC2 (ROC2).